We begin with the raw amino-acid sequence, 107 residues long: Pathogenesis-related protein PR-4 (107 aa).

Residues 1 to 107 (QNINWDLRTA…VNYDFVDCGD (107 aa)) enclose the Barwin domain. Disulfide bonds link Cys14-Cys46, Cys35-Cys69, and Cys49-Cys105.

In terms of tissue distribution, preferentially expressed in the tissue surrounding the abscission zone of fruitlets.

It is found in the secreted. The protein localises to the cell wall. May be involved in protecting plant tissues from pathogen infection. This Prunus persica (Peach) protein is Pathogenesis-related protein PR-4.